We begin with the raw amino-acid sequence, 257 residues long: NAD-capped RNA hydrolase NudC (257 aa).

R69 lines the substrate pocket. C98 and C101 together coordinate Zn(2+). Substrate is bound at residue E111. Residues C116 and C119 each contribute to the Zn(2+) site. A substrate-binding site is contributed by Y124. The 124-residue stretch at 125-248 (PQIAPCIIVA…TVARRLIEDT (124 aa)) folds into the Nudix hydrolase domain. Residues A158, E174, and E178 each coordinate a divalent metal cation. Residues 159–180 (GFVEVGETLEQAVAREVMEESG) carry the Nudix box motif. 192–199 (QPWPFPQS) serves as a coordination point for substrate. An a divalent metal cation-binding site is contributed by E219. A241 contributes to the substrate binding site.

Belongs to the Nudix hydrolase family. NudC subfamily. Homodimer. It depends on Mg(2+) as a cofactor. Mn(2+) serves as cofactor. The cofactor is Zn(2+).

The enzyme catalyses a 5'-end NAD(+)-phospho-ribonucleoside in mRNA + H2O = a 5'-end phospho-adenosine-phospho-ribonucleoside in mRNA + beta-nicotinamide D-ribonucleotide + 2 H(+). The catalysed reaction is NAD(+) + H2O = beta-nicotinamide D-ribonucleotide + AMP + 2 H(+). It catalyses the reaction NADH + H2O = reduced beta-nicotinamide D-ribonucleotide + AMP + 2 H(+). Its function is as follows. mRNA decapping enzyme that specifically removes the nicotinamide adenine dinucleotide (NAD) cap from a subset of mRNAs by hydrolyzing the diphosphate linkage to produce nicotinamide mononucleotide (NMN) and 5' monophosphate mRNA. The NAD-cap is present at the 5'-end of some mRNAs and stabilizes RNA against 5'-processing. Has preference for mRNAs with a 5'-end purine. Catalyzes the hydrolysis of a broad range of dinucleotide pyrophosphates. The sequence is that of NAD-capped RNA hydrolase NudC from Salmonella typhi.